We begin with the raw amino-acid sequence, 215 residues long: Cytochrome c biogenesis ATP-binding export protein CcmA (215 aa).

Positions 12-215 constitute an ABC transporter domain; that stretch reads LAAHALTYSR…TRLLHLQKAP (204 aa). Residue 44–51 coordinates ATP; the sequence is GPNGIGKT.

The protein belongs to the ABC transporter superfamily. CcmA exporter (TC 3.A.1.107) family. The complex is composed of two ATP-binding proteins (CcmA) and two transmembrane proteins (CcmB).

Its subcellular location is the cell inner membrane. It catalyses the reaction heme b(in) + ATP + H2O = heme b(out) + ADP + phosphate + H(+). Part of the ABC transporter complex CcmAB involved in the biogenesis of c-type cytochromes; once thought to export heme, this seems not to be the case, but its exact role is uncertain. Responsible for energy coupling to the transport system. The chain is Cytochrome c biogenesis ATP-binding export protein CcmA from Xylella fastidiosa (strain Temecula1 / ATCC 700964).